The following is a 308-amino-acid chain: Alternaria stem canker resistance protein 1 (308 aa).

The next 6 membrane-spanning stretches (helical) occupy residues Y21–L41, F82–F102, L128–E148, V165–A185, F213–I233, and I254–W274. The region spanning N73 to L287 is the TLC domain.

The protein localises to the endoplasmic reticulum membrane. Its function is as follows. Mediates resistance to sphinganine-analog mycotoxins (SAMs) by restoring the sphingolipid biosynthesis. Could salvage the transport of GPI-anchored proteins from the endoplasmic reticulum to the Golgi apparatus in ceramides-depleted cells after SAM exposure. This is Alternaria stem canker resistance protein 1 from Solanum lycopersicum (Tomato).